The sequence spans 230 residues: MADEKNKPENPDLDQRDINNPRDREALKQAADDFLKARRAEARAEAAADEAEGEVDETANRIAVLEADNTELKDQMLRVAAEMENLRKRTQRDVQDARAYAITNFARDMLSVSDNLRRALDAIPADALEADSNLKSLSEGVEMTERAMLLALERHGVKKLEPEGQKFDPNFHQAMFEVPNPDLPNNTVVQVVQAGYAIGDRVLRPAMVGVSKGGPKVSAENGASTSEDNA.

2 disordered regions span residues 1–26 (MADE…DREA) and 209–230 (GVSK…EDNA). A compositionally biased stretch (polar residues) spans 221 to 230 (NGASTSEDNA).

It belongs to the GrpE family. In terms of assembly, homodimer.

It localises to the cytoplasm. In terms of biological role, participates actively in the response to hyperosmotic and heat shock by preventing the aggregation of stress-denatured proteins, in association with DnaK and GrpE. It is the nucleotide exchange factor for DnaK and may function as a thermosensor. Unfolded proteins bind initially to DnaJ; upon interaction with the DnaJ-bound protein, DnaK hydrolyzes its bound ATP, resulting in the formation of a stable complex. GrpE releases ADP from DnaK; ATP binding to DnaK triggers the release of the substrate protein, thus completing the reaction cycle. Several rounds of ATP-dependent interactions between DnaJ, DnaK and GrpE are required for fully efficient folding. In Brucella suis biovar 1 (strain 1330), this protein is Protein GrpE.